A 545-amino-acid polypeptide reads, in one-letter code: 4-coumarate--CoA ligase 1 (545 aa).

The ATP site is built by Ser192, Ser193, Gly194, Thr195, Thr196, and Lys200. 2 residues coordinate (E)-4-coumaroyl-AMP: Tyr242 and Ser246. Lys263 is a CoA binding site. The tract at residues 265-334 (DIAQFLELIP…AKFPNAKLGQ (70 aa)) is SBD1. (E)-4-coumaroyl-AMP contacts are provided by Ala312, Gln334, Gly335, Thr339, and Met347. ATP is bound by residues Gln334, Gly335, and Thr339. An SBD2 region spans residues 335–402 (GYGMTEAGPV…IRGDQIMKGY (68 aa)). The ATP site is built by Asp423 and Arg438. (E)-4-coumaroyl-AMP-binding residues include Lys440 and Lys444. CoA is bound by residues Lys446 and Gly447. Lys529 contacts ATP.

Belongs to the ATP-dependent AMP-binding enzyme family. The cofactor is Mg(2+).

It carries out the reaction (E)-4-coumarate + ATP + CoA = (E)-4-coumaroyl-CoA + AMP + diphosphate. The enzyme catalyses (E)-4-coumarate + ATP + H(+) = (E)-4-coumaroyl-AMP + diphosphate. The catalysed reaction is (E)-4-coumaroyl-AMP + CoA = (E)-4-coumaroyl-CoA + AMP + H(+). It functions in the pathway phytoalexin biosynthesis; 3,4',5-trihydroxystilbene biosynthesis; 3,4',5-trihydroxystilbene from trans-4-coumarate: step 1/2. In terms of biological role, carboxylate--CoA ligase that may use 4-coumarate as substrate. Follows a two-step reaction mechanism, wherein the carboxylate substrate first undergoes adenylation by ATP, followed by a thioesterification in the presence of CoA to yield the final CoA thioester. This chain is 4-coumarate--CoA ligase 1 (4CL1), found in Solanum tuberosum (Potato).